Reading from the N-terminus, the 217-residue chain is UPF0502 protein ETA_20480 (217 aa).

Positions 169-188 (GEVDESSRADGHHPDDHRGD) are disordered. The span at 173-188 (ESSRADGHHPDDHRGD) shows a compositional bias: basic and acidic residues.

Belongs to the UPF0502 family.

The sequence is that of UPF0502 protein ETA_20480 from Erwinia tasmaniensis (strain DSM 17950 / CFBP 7177 / CIP 109463 / NCPPB 4357 / Et1/99).